An 87-amino-acid chain; its full sequence is Small ribosomal subunit protein bS20 (87 aa).

The segment at 1–29 (MANTAQARKRARQAVKQNAHNSSQRSTLR) is disordered. Residues 20 to 29 (HNSSQRSTLR) are compositionally biased toward polar residues.

This sequence belongs to the bacterial ribosomal protein bS20 family.

In terms of biological role, binds directly to 16S ribosomal RNA. This chain is Small ribosomal subunit protein bS20, found in Herminiimonas arsenicoxydans.